Here is a 150-residue protein sequence, read N- to C-terminus: MYGKIIFVLLLSEIVSISALSTTEVAMHTSTSSSVTKSYISSQTNDTHKRDTYAATPRAHEVSEISVRTVYPPEEETGERVQLAHHFSEPEITLIIFGVMAGVIGTILLISYGIRRLIKKSPSDVKPLPSPDTDVPLSSVEIENPETSDQ.

An N-terminal signal peptide occupies residues 1–19 (MYGKIIFVLLLSEIVSISA). The Extracellular portion of the chain corresponds to 20-91 (LSTTEVAMHT…QLAHHFSEPE (72 aa)). An O-linked (GalNAc...) serine glycan is attached at Ser21. 3 O-linked (GalNAc...) threonine glycosylation sites follow: Thr22, Thr23, and Thr29. O-linked (GalNAc...) serine glycosylation occurs at Ser30. Thr31 carries an O-linked (GalNAc...) threonine glycan. Ser32 carries O-linked (GalNAc...) serine glycosylation. O-linked (GalNAc...) threonine glycosylation is present at Thr36. 2 O-linked (GalNAc...) serine glycosylation sites follow: Ser38 and Ser41. A glycan (O-linked (GalNAc...) threonine) is linked at Thr44. A glycan (N-linked (GlcNAc...) asparagine) is linked at Asn45. O-linked (GalNAc...) threonine glycosylation is found at Thr52 and Thr56. Ser63 and Ser66 each carry an O-linked (GalNAc...) serine glycan. Thr69 carries an O-linked (GalNAc...) threonine glycan. A helical membrane pass occupies residues 92-114 (ITLIIFGVMAGVIGTILLISYGI). The Cytoplasmic segment spans residues 115-150 (RRLIKKSPSDVKPLPSPDTDVPLSSVEIENPETSDQ). The tract at residues 121-150 (SPSDVKPLPSPDTDVPLSSVEIENPETSDQ) is disordered. Thr133 carries the post-translational modification Phosphothreonine. Phosphoserine occurs at positions 138 and 148.

The protein belongs to the glycophorin A family. As to quaternary structure, homodimer. Component of the ankyrin-1 complex in the erythrocyte, composed of ANK1, RHCE, RHAG, SLC4A1, EPB42, GYPA, GYPB and AQP1. Interacts with SLC4A1; a GYPA monomer is bound at each end of the SLC4A1 dimer forming a heterotetramer. (Microbial infection) Interacts with Streptococcus gordonii hsa protein. In terms of assembly, (Microbial infection) Interacts (in a sialic acid-independent manner) with P.falciparum MSP1 subunit p83. In terms of processing, the major O-linked glycan are NeuAc-alpha-(2-3)-Gal-beta-(1-3)-[NeuAc-alpha-(2-6)]-GalNAcOH (about 78 %) and NeuAc-alpha-(2-3)-Gal-beta-(1-3)-GalNAcOH (17 %). Minor O-glycans (5 %) include NeuAc-alpha-(2-3)-Gal-beta-(1-3)-[NeuAc-alpha-(2-6)]-GalNAcOH NeuAc-alpha-(2-8)-NeuAc-alpha-(2-3)-Gal-beta-(1-3)-GalNAcOH. About 1% of all O-linked glycans carry blood group A, B and H determinants. They derive from a type-2 precursor core structure, Gal-beta-(1,3)-GlcNAc-beta-1-R, and the antigens are synthesized by addition of fucose (H antigen-specific) and then N-acetylgalactosamine (A antigen-specific) or galactose (B antigen-specific). Specifically O-linked-glycans are NeuAc-alpha-(2-3)-Gal-beta-(1-3)-GalNAcOH-(6-1)-GlcNAc-beta-(4-1)-[Fuc-alpha-(1-2)]-Gal-beta-(3-1)-GalNAc-alpha (about 1%, B antigen-specific) and NeuAc-alpha-(2-3)-Gal-beta-(1-3)-GalNAcOH-(6-1)-GlcNAc-beta-(4-1)-[Fuc-alpha-(1-2)]-Gal-beta (1 %, O antigen-, A antigen- and B antigen-specific).

The protein localises to the cell membrane. Component of the ankyrin-1 complex, a multiprotein complex involved in the stability and shape of the erythrocyte membrane. Glycophorin A is the major intrinsic membrane protein of the erythrocyte. The N-terminal glycosylated segment, which lies outside the erythrocyte membrane, has MN blood group receptors. Appears to be important for the function of SLC4A1 and is required for high activity of SLC4A1. May be involved in translocation of SLC4A1 to the plasma membrane. Functionally, (Microbial infection) Appears to be a receptor for Hepatitis A virus (HAV). In terms of biological role, (Microbial infection) Receptor for P.falciparum erythrocyte-binding antigen 175 (EBA-175); binding of EBA-175 is dependent on sialic acid residues of the O-linked glycans. The polypeptide is Glycophorin-A (Homo sapiens (Human)).